Consider the following 751-residue polypeptide: Photosystem I P700 chlorophyll a apoprotein A1 (751 aa).

Transmembrane regions (helical) follow at residues 71–94 (VFSA…FHGA), 157–180 (LYCT…FHYH), 196–220 (LNHH…HVSL), 292–310 (IAHH…GHMY), 347–370 (WHAQ…HHMY), 386–412 (LSLF…IFMV), 434–456 (AIIS…LYIH), and 532–550 (FLVH…LILL). Cys-574 and Cys-583 together coordinate [4Fe-4S] cluster. The next 2 helical transmembrane spans lie at 590–611 (HVFL…HFSW) and 665–687 (LSAY…MFLF). Position 676 (His-676) interacts with chlorophyll a'. Chlorophyll a is bound by residues Met-684 and Tyr-692. Trp-693 serves as a coordination point for phylloquinone. A helical transmembrane segment spans residues 725-745 (AVGVTHYLLGGIATTWAFFLA).

Belongs to the PsaA/PsaB family. As to quaternary structure, the PsaA/B heterodimer binds the P700 chlorophyll special pair and subsequent electron acceptors. PSI consists of a core antenna complex that captures photons, and an electron transfer chain that converts photonic excitation into a charge separation. The eukaryotic PSI reaction center is composed of at least 11 subunits. It depends on P700 is a chlorophyll a/chlorophyll a' dimer, A0 is one or more chlorophyll a, A1 is one or both phylloquinones and FX is a shared 4Fe-4S iron-sulfur center. as a cofactor.

It is found in the plastid. The protein resides in the chloroplast thylakoid membrane. It catalyses the reaction reduced [plastocyanin] + hnu + oxidized [2Fe-2S]-[ferredoxin] = oxidized [plastocyanin] + reduced [2Fe-2S]-[ferredoxin]. Functionally, psaA and PsaB bind P700, the primary electron donor of photosystem I (PSI), as well as the electron acceptors A0, A1 and FX. PSI is a plastocyanin-ferredoxin oxidoreductase, converting photonic excitation into a charge separation, which transfers an electron from the donor P700 chlorophyll pair to the spectroscopically characterized acceptors A0, A1, FX, FA and FB in turn. Oxidized P700 is reduced on the lumenal side of the thylakoid membrane by plastocyanin. The polypeptide is Photosystem I P700 chlorophyll a apoprotein A1 (Zea mays (Maize)).